A 243-amino-acid chain; its full sequence is Pyridoxine 5'-phosphate synthase (243 aa).

3-amino-2-oxopropyl phosphate is bound at residue Asn-9. 11–12 (DH) serves as a coordination point for 1-deoxy-D-xylulose 5-phosphate. Arg-20 provides a ligand contact to 3-amino-2-oxopropyl phosphate. His-45 functions as the Proton acceptor in the catalytic mechanism. Residues Arg-47 and His-52 each coordinate 1-deoxy-D-xylulose 5-phosphate. The active-site Proton acceptor is the Glu-72. Residue Thr-102 coordinates 1-deoxy-D-xylulose 5-phosphate. His-193 (proton donor) is an active-site residue. 3-amino-2-oxopropyl phosphate is bound by residues Gly-194 and 215-216 (GH).

Belongs to the PNP synthase family. In terms of assembly, homooctamer; tetramer of dimers.

It is found in the cytoplasm. The enzyme catalyses 3-amino-2-oxopropyl phosphate + 1-deoxy-D-xylulose 5-phosphate = pyridoxine 5'-phosphate + phosphate + 2 H2O + H(+). Its pathway is cofactor biosynthesis; pyridoxine 5'-phosphate biosynthesis; pyridoxine 5'-phosphate from D-erythrose 4-phosphate: step 5/5. In terms of biological role, catalyzes the complicated ring closure reaction between the two acyclic compounds 1-deoxy-D-xylulose-5-phosphate (DXP) and 3-amino-2-oxopropyl phosphate (1-amino-acetone-3-phosphate or AAP) to form pyridoxine 5'-phosphate (PNP) and inorganic phosphate. The protein is Pyridoxine 5'-phosphate synthase of Vibrio vulnificus (strain CMCP6).